The chain runs to 185 residues: Pyruvate/ketoisovalerate oxidoreductases common subunit gamma (185 aa).

As to quaternary structure, heterotetramer of one alpha, one beta, one delta and one gamma chain.

The enzyme catalyses 2 oxidized [2Fe-2S]-[ferredoxin] + pyruvate + CoA = 2 reduced [2Fe-2S]-[ferredoxin] + acetyl-CoA + CO2 + H(+). It carries out the reaction 3-methyl-2-oxobutanoate + 2 oxidized [2Fe-2S]-[ferredoxin] + CoA = 2-methylpropanoyl-CoA + 2 reduced [2Fe-2S]-[ferredoxin] + CO2 + H(+). This is Pyruvate/ketoisovalerate oxidoreductases common subunit gamma (porG) from Thermococcus kodakarensis (strain ATCC BAA-918 / JCM 12380 / KOD1) (Pyrococcus kodakaraensis (strain KOD1)).